Here is a 188-residue protein sequence, read N- to C-terminus: MEGNEKAEQKNATSEESTDIFENPGEGLEKATFAAGCFWGIEEAFRQVKGVVATAVGYSGGHFEKPTYEQVCTLDTGHAEAVRVIFDPKVVSYKNLLDVFWKIHDPTTKNRQGPDVGKQYRSVIFYHNEEQKAAALASKEELEKAGVFKNPIVTEIVPVSEFYMAEDYHQQYFEKKGFLQNILRSFKK.

A disordered region spans residues 1–25; that stretch reads MEGNEKAEQKNATSEESTDIFENPG. The active site involves cysteine 37.

Belongs to the MsrA Met sulfoxide reductase family.

The enzyme catalyses L-methionyl-[protein] + [thioredoxin]-disulfide + H2O = L-methionyl-(S)-S-oxide-[protein] + [thioredoxin]-dithiol. It catalyses the reaction [thioredoxin]-disulfide + L-methionine + H2O = L-methionine (S)-S-oxide + [thioredoxin]-dithiol. Functionally, has an important function as a repair enzyme for proteins that have been inactivated by oxidation. Catalyzes the reversible oxidation-reduction of methionine sulfoxide in proteins to methionine. The chain is Peptide methionine sulfoxide reductase MsrA from Methanosarcina acetivorans (strain ATCC 35395 / DSM 2834 / JCM 12185 / C2A).